Here is a 36-residue protein sequence, read N- to C-terminus: Pancreatic polypeptide (36 aa).

Y36 is subject to Tyrosine amide.

Belongs to the NPY family.

The protein localises to the secreted. In terms of biological role, hormone secreted by pancreatic cells that acts as a regulator of pancreatic and gastrointestinal functions probably by signaling through the G protein-coupled receptor NPY4R2. This chain is Pancreatic polypeptide (PPY), found in Erinaceus europaeus (Western European hedgehog).